A 432-amino-acid polypeptide reads, in one-letter code: Adenylosuccinate synthetase (432 aa).

Residues 13–19 (GDEGKGK) and 41–43 (GHT) each bind GTP. The active-site Proton acceptor is D14. 2 residues coordinate Mg(2+): D14 and G41. IMP-binding positions include 14 to 17 (DEGK), 39 to 42 (NAGH), T130, R144, Q225, T240, and R304. The Proton donor role is filled by H42. A substrate-binding site is contributed by 300 to 306 (ATTGRRR). GTP is bound by residues R306, 332 to 334 (KLD), and 414 to 416 (STG).

The protein belongs to the adenylosuccinate synthetase family. In terms of assembly, homodimer. Mg(2+) is required as a cofactor.

It localises to the cytoplasm. The enzyme catalyses IMP + L-aspartate + GTP = N(6)-(1,2-dicarboxyethyl)-AMP + GDP + phosphate + 2 H(+). It participates in purine metabolism; AMP biosynthesis via de novo pathway; AMP from IMP: step 1/2. In terms of biological role, plays an important role in the de novo pathway of purine nucleotide biosynthesis. Catalyzes the first committed step in the biosynthesis of AMP from IMP. The sequence is that of Adenylosuccinate synthetase from Methylococcus capsulatus (strain ATCC 33009 / NCIMB 11132 / Bath).